A 205-amino-acid chain; its full sequence is Putative 3-methyladenine DNA glycosylase (205 aa).

This sequence belongs to the DNA glycosylase MPG family.

This Bacillus thuringiensis (strain Al Hakam) protein is Putative 3-methyladenine DNA glycosylase.